A 512-amino-acid chain; its full sequence is Acid-sensing ion channel 2 (512 aa).

Topologically, residues 1 to 37 (MDLKESPSEGSLQPSSIQIFANTSTLHGIRHIFVYGP) are cytoplasmic. A phosphoserine mark is found at serine 8 and serine 11. A helical membrane pass occupies residues 38–58 (LTIRRVLWAVAFVGSLGLLLV). Residues 59-427 (ESSERVSYYF…EQKKAYEVAA (369 aa)) are Extracellular-facing. Cystine bridges form between cysteine 92–cysteine 193, cysteine 289–cysteine 364, cysteine 307–cysteine 360, cysteine 311–cysteine 358, cysteine 320–cysteine 342, and cysteine 322–cysteine 334. Asparagine 365 and asparagine 392 each carry an N-linked (GlcNAc...) asparagine glycan. Residues 428-448 (LLGDIGGQMGLFIGASILTIL) form a helical membrane-spanning segment. The GAS motif; ion selectivity filter signature appears at 441–443 (GAS). The Cytoplasmic portion of the chain corresponds to 449–512 (ELFDYIYELI…ALGTLEEIAC (64 aa)).

It belongs to the amiloride-sensitive sodium channel (TC 1.A.6) family. ASIC2 subfamily. As to quaternary structure, can form homotrimers. Heterotrimer; forms functional heterotrimers producing channel with different properties. Forms heterotrimers with ASIC1; while ASIC1 determines current amplitude, ASIC2 influences the properties of the current. Forms heterotrimers with ASIC3; resulting in channels with distinct properties. Interacts with STOM; STOM regulates the gating of ASIC2-containing channels. Interacts with PICK1; promotes ASIC3 phosphorylation by PKC and activation of ASIC2/ASIC3 heterotrimers. In terms of tissue distribution, expressed by sensory neurons. Expressed by nociceptive sensory neurons, spiral ganglion (SG) neurons and the retina (at protein level). Expressed in outer nuclear layer of retina (photoreceptors) and to a lower extent in distal and proximal inner nuclear layer.

The protein localises to the cell membrane. The catalysed reaction is Na(+)(in) = Na(+)(out). The enzyme catalyses K(+)(in) = K(+)(out). It carries out the reaction Li(+)(in) = Li(+)(out). Inhibited by the diuretic drug amiloride. Forms pH-gated trimeric sodium channels that act as postsynaptic excitatory sensors in the nervous system. Upon extracellular acidification, these channels generate rapid, transient inward currents that fully desensitize. Highly selective for sodium, they are permeable to other cations. By forming heterotrimeric channels with ASIC1, could contribute to synaptic plasticity, learning, and memory. Additionally, as acid sensors at nerve terminals, plays a role in mechanosensation and phototransduction. Its function is as follows. Has no pH-gated sodium channel activity per se but can associate with other ASICs to produce functional channels with specific properties. This chain is Acid-sensing ion channel 2, found in Mus musculus (Mouse).